The sequence spans 177 residues: Large ribosomal subunit protein bL19 (177 aa).

Belongs to the bacterial ribosomal protein bL19 family.

This protein is located at the 30S-50S ribosomal subunit interface and may play a role in the structure and function of the aminoacyl-tRNA binding site. The chain is Large ribosomal subunit protein bL19 from Rhizobium meliloti (strain 1021) (Ensifer meliloti).